Here is a 574-residue protein sequence, read N- to C-terminus: Mitochondrial distribution and morphology protein 34 (574 aa).

An SMP-LTD domain is found at Met1–Leu195. Disordered regions lie at residues Arg210–Val233, Glu301–Thr403, and Ser479–Ala515. Low complexity-rich tracts occupy residues Ser212–Pro224, Gly302–Val314, and Ser323–Ser334. Residues Val335–Pro345 are compositionally biased toward polar residues. A compositionally biased stretch (low complexity) spans Gly346 to Gly359. Basic residues predominate over residues Arg360–Arg373. Residues Val374 to Asp385 show a composition bias toward basic and acidic residues. Residues Ser393–Thr403 show a composition bias toward low complexity. Residues Lys484–Ser493 show a composition bias toward polar residues.

The protein belongs to the MDM34 family. In terms of assembly, component of the ER-mitochondria encounter structure (ERMES) or MDM complex, composed of MMM1, MDM10, MDM12 and MDM34.

Its subcellular location is the mitochondrion outer membrane. Component of the ERMES/MDM complex, which serves as a molecular tether to connect the endoplasmic reticulum (ER) and mitochondria. Components of this complex are involved in the control of mitochondrial shape and protein biogenesis, and function in nonvesicular lipid trafficking between the ER and mitochondria. MDM34 is required for the interaction of the ER-resident membrane protein MMM1 and the outer mitochondrial membrane-resident beta-barrel protein MDM10. This is Mitochondrial distribution and morphology protein 34 from Coccidioides immitis (strain RS) (Valley fever fungus).